A 332-amino-acid polypeptide reads, in one-letter code: Ribosomal RNA small subunit methyltransferase H (332 aa).

S-adenosyl-L-methionine-binding positions include 36–38 (GGH), Asp61, Phe88, Asp114, and Gln121.

It belongs to the methyltransferase superfamily. RsmH family.

It is found in the cytoplasm. The catalysed reaction is cytidine(1402) in 16S rRNA + S-adenosyl-L-methionine = N(4)-methylcytidine(1402) in 16S rRNA + S-adenosyl-L-homocysteine + H(+). Functionally, specifically methylates the N4 position of cytidine in position 1402 (C1402) of 16S rRNA. The sequence is that of Ribosomal RNA small subunit methyltransferase H from Pelodictyon phaeoclathratiforme (strain DSM 5477 / BU-1).